The primary structure comprises 349 residues: Small ribosomal subunit protein uS2 (349 aa).

The segment at 302-334 (QNNYDPSKRGYNPKYVNHKSTFNKFNNKKPVDS) is disordered.

The protein belongs to the universal ribosomal protein uS2 family.

The sequence is that of Small ribosomal subunit protein uS2 from Ureaplasma parvum serovar 3 (strain ATCC 27815 / 27 / NCTC 11736).